We begin with the raw amino-acid sequence, 448 residues long: Phosphohexose mutases (448 aa).

The active-site Phosphoserine intermediate is the S97. Mg(2+) is bound by residues S97, D237, D239, and D241.

This sequence belongs to the phosphohexose mutase family. Requires Mg(2+) as cofactor.

The enzyme catalyses alpha-D-glucose 1-phosphate = alpha-D-glucose 6-phosphate. It catalyses the reaction alpha-D-mannose 1-phosphate = D-mannose 6-phosphate. It participates in nucleotide-sugar biosynthesis; GDP-alpha-D-mannose biosynthesis; alpha-D-mannose 1-phosphate from D-fructose 6-phosphate: step 2/2. Involved in xanthan production. The polypeptide is Phosphohexose mutases (xanA) (Xanthomonas campestris pv. campestris (strain B100)).